Here is a 197-residue protein sequence, read N- to C-terminus: Imidazoleglycerol-phosphate dehydratase (197 aa).

Belongs to the imidazoleglycerol-phosphate dehydratase family.

The protein localises to the cytoplasm. It catalyses the reaction D-erythro-1-(imidazol-4-yl)glycerol 3-phosphate = 3-(imidazol-4-yl)-2-oxopropyl phosphate + H2O. It functions in the pathway amino-acid biosynthesis; L-histidine biosynthesis; L-histidine from 5-phospho-alpha-D-ribose 1-diphosphate: step 6/9. In Gloeobacter violaceus (strain ATCC 29082 / PCC 7421), this protein is Imidazoleglycerol-phosphate dehydratase.